The primary structure comprises 181 residues: Protoporphyrinogen IX dehydrogenase [quinone] (181 aa).

The Flavodoxin-like domain occupies 3–172 (TLILFSTRDG…QVANFAREIA (170 aa)). Residues 9 to 13 (TRDGQ) and 84 to 152 (FYSV…ETDT) contribute to the FMN site.

It belongs to the HemG family. The cofactor is FMN.

It is found in the cell inner membrane. It catalyses the reaction protoporphyrinogen IX + 3 a menaquinone = protoporphyrin IX + 3 a menaquinol. The enzyme catalyses protoporphyrinogen IX + 3 a ubiquinone = protoporphyrin IX + 3 a ubiquinol. The catalysed reaction is protoporphyrinogen IX + 3 a quinone = protoporphyrin IX + 3 a quinol. Its pathway is porphyrin-containing compound metabolism; protoporphyrin-IX biosynthesis; protoporphyrin-IX from protoporphyrinogen-IX: step 1/1. In terms of biological role, catalyzes the 6-electron oxidation of protoporphyrinogen IX to form protoporphyrin IX; under anaerobic conditions uses menaquinone as an electron acceptor, under aerobic condition uses ubiquinone as an electron acceptor. The protein is Protoporphyrinogen IX dehydrogenase [quinone] of Escherichia coli O157:H7.